The following is a 408-amino-acid chain: Dual-specificity RNA methyltransferase RlmN (408 aa).

Glutamate 120 acts as the Proton acceptor in catalysis. Residues 126-375 (EEGRGTLCIS…IRTPRGRDIL (250 aa)) form the Radical SAM core domain. Cysteine 133 and cysteine 378 are oxidised to a cystine. Residues cysteine 140, cysteine 144, and cysteine 147 each coordinate [4Fe-4S] cluster. Residues 204-205 (GE), serine 236, 258-260 (SLH), and asparagine 335 each bind S-adenosyl-L-methionine. Catalysis depends on cysteine 378, which acts as the S-methylcysteine intermediate.

The protein belongs to the radical SAM superfamily. RlmN family. The cofactor is [4Fe-4S] cluster.

The protein resides in the cytoplasm. It carries out the reaction adenosine(2503) in 23S rRNA + 2 reduced [2Fe-2S]-[ferredoxin] + 2 S-adenosyl-L-methionine = 2-methyladenosine(2503) in 23S rRNA + 5'-deoxyadenosine + L-methionine + 2 oxidized [2Fe-2S]-[ferredoxin] + S-adenosyl-L-homocysteine. It catalyses the reaction adenosine(37) in tRNA + 2 reduced [2Fe-2S]-[ferredoxin] + 2 S-adenosyl-L-methionine = 2-methyladenosine(37) in tRNA + 5'-deoxyadenosine + L-methionine + 2 oxidized [2Fe-2S]-[ferredoxin] + S-adenosyl-L-homocysteine. In terms of biological role, specifically methylates position 2 of adenine 2503 in 23S rRNA and position 2 of adenine 37 in tRNAs. m2A2503 modification seems to play a crucial role in the proofreading step occurring at the peptidyl transferase center and thus would serve to optimize ribosomal fidelity. The polypeptide is Dual-specificity RNA methyltransferase RlmN (Rhizobium leguminosarum bv. trifolii (strain WSM2304)).